The chain runs to 393 residues: MNVPATRKDLMIVNMGPHHPSMHGVLRLIVTLDGEDVIDCEPILGYLHRGMEKIAENRTIIQYLPYVTRWDYLATMFTEAITVNGPEQLGNIQVPKRASYIRVIMLELSRIASHLLWLGPFMADIGAQTPFFYIFREREFIYDLFEAATGMRMMHNFFRIGGVAADLPHGWIDKCFDFCNYFFTRVVEYQKLITRNPIFLERVEGVGVVGGEEVINWGLSGPMLRASGIQWDLRQVDNYECYEEFDWEVQWQKEGDSLARYLVRIGEMMESIKIIQQALEGIPGGPYENLEIRCFGREKEPEWNDFEYRFIGKKPSPTFELPKQELYVRVEAPKGELGIFLIGDQNGFPWRWKIRPPGFINLQILPQLVKRMKLADIMTILGSIDIIMGEVDR.

Belongs to the complex I 49 kDa subunit family. As to quaternary structure, NDH is composed of at least 16 different subunits, 5 of which are encoded in the nucleus.

It is found in the plastid. The protein resides in the chloroplast thylakoid membrane. It carries out the reaction a plastoquinone + NADH + (n+1) H(+)(in) = a plastoquinol + NAD(+) + n H(+)(out). It catalyses the reaction a plastoquinone + NADPH + (n+1) H(+)(in) = a plastoquinol + NADP(+) + n H(+)(out). In terms of biological role, NDH shuttles electrons from NAD(P)H:plastoquinone, via FMN and iron-sulfur (Fe-S) centers, to quinones in the photosynthetic chain and possibly in a chloroplast respiratory chain. The immediate electron acceptor for the enzyme in this species is believed to be plastoquinone. Couples the redox reaction to proton translocation, and thus conserves the redox energy in a proton gradient. The polypeptide is NAD(P)H-quinone oxidoreductase subunit H, chloroplastic (Lotus japonicus (Lotus corniculatus var. japonicus)).